Reading from the N-terminus, the 361-residue chain is Free fatty acid receptor 4 (361 aa).

The Extracellular portion of the chain corresponds to 1–45 (MSPECARAAGDAPLRSLEQANRTRFSFFSDVKGDHRLLLAAVETT). A glycan (N-linked (GlcNAc...) asparagine) is linked at asparagine 21. A helical membrane pass occupies residues 46-66 (VLALIFAVSLLGNVCALVLVA). Residues 67-77 (RRRRRGTTACL) are Cytoplasmic-facing. The chain crosses the membrane as a helical span at residues 78–98 (VLNLFCADLLFISAIPLVLAV). Topologically, residues 99–112 (RWTEAWLLGPVACH) are extracellular. A disulfide bridge connects residues cysteine 111 and cysteine 194. The chain crosses the membrane as a helical span at residues 113–133 (LLFYLMTLSGSVTILTLAAVS). Over 134-156 (LERMVCIVHLQRGVRGPGRRARA) the chain is Cytoplasmic. The chain crosses the membrane as a helical span at residues 157–177 (VLLTLIWGYSAVAALPLCVFF). At 178–204 (RVVPQRLPGADQEISICTLIWPTIAGE) the chain is on the extracellular side. The helical transmembrane segment at 205–225 (ISWDVSFVTLNFLVPGLVIVI) threads the bilayer. Residues 226 to 268 (SYSKILQITKASRKRLTVSLAYSESHQIRVSQQDFRLFRTLFL) are Cytoplasmic-facing. Residues 269-289 (LMVSFFIMWSPIIITILLILI) form a helical membrane-spanning segment. The Extracellular portion of the chain corresponds to 290 to 295 (QNFKQD). The helical transmembrane segment at 296–316 (LVIWPSLFFWVVAFTFANSAL) threads the bilayer. The Cytoplasmic portion of the chain corresponds to 317–361 (NPILYNMTLCRNEWKKIFCCFWFPEKGAILTDTSVKRNDLSVISG). Threonine 347 and threonine 349 each carry phosphothreonine. Residues serine 350, serine 357, and serine 360 each carry the phosphoserine modification.

This sequence belongs to the G-protein coupled receptor 1 family. Interacts (via C-terminus) with ARRB2 following LCFAs stimulation. Post-translationally, phosphorylated at two clusters of Ser and Thr residues located in the intracellular C-terminus. Prerequisite for FFAR4 internalization via an ARRB2-dependent pathway. Highly expressed in lung and colon.

Its subcellular location is the cell membrane. The protein resides in the endosome membrane. The protein localises to the lysosome membrane. It localises to the cell projection. It is found in the cilium membrane. Its function is as follows. G-protein-coupled receptor for long-chain fatty acids (LCFAs) with a major role in adipogenesis, energy metabolism and inflammation. Signals via G-protein and beta-arrestin pathways. LCFAs sensing initiates activation of phosphoinositidase C-linked G proteins GNAQ and GNA11 (G(q)/G(11)), inducing a variety of cellular responses via second messenger pathways such as intracellular calcium mobilization, modulation of cyclic adenosine monophosphate (cAMP) production, and mitogen-activated protein kinases (MAPKs). After LCFAs binding, associates with beta-arrestin ARRB2 that acts as an adapter protein coupling the receptor to specific downstream signaling pathways, as well as mediating receptor endocytosis. In response to dietary fats, plays an important role in the regulation of adipocyte proliferation and differentiation. Acts as a receptor for omega-3 polyunsaturated fatty acids (PUFAs) at primary cilium of perivascular preadipocytes, initiating an adipogenic program via cAMP and CTCF-dependent chromatin remodeling that ultimately results in transcriptional activation of adipogenic genes and cell cycle entry. Induces differentiation of brown and beige adipocytes probably via autocrine and endocrine functions of FGF21 hormone. Contributes to the thermogenic activation of brown adipose tissue and the browning of white adipose tissue. Activates brown adipocytes by initiating intracellular calcium signaling leading to mitochondrial depolarization and fission, and overall increased mitochondrial respiration. Consequently stimulates fatty acid uptake and oxidation in mitochondria together with UCP1-mediated thermogenic respiration, eventually reducing fat mass. Regulates bi-potential differentiation of bone marrow mesenchymal stem cells toward osteoblasts or adipocytes likely by up-regulating distinct integrins. In response to dietary fats regulates hormone secretion and appetite. Stimulates GIP and GLP1 secretion from enteroendocrine cells as well as GCG secretion in pancreatic alpha cells, thereby playing a role in the regulation of blood glucose levels. Negatively regulates glucose-induced SST secretion in pancreatic delta cells. Mediates LCFAs inhibition of GHRL secretion, an appetite-controlling hormone. In taste buds, contributes to sensing of dietary fatty acids by the gustatory system. During the inflammatory response, promotes anti-inflammatory M2 macrophage differentiation in adipose tissue. Mediates the anti-inflammatory effects of omega-3 PUFAs via inhibition of NLRP3 inflammasome activation. In this pathway, interacts with adapter protein ARRB2 and inhibits the priming step triggered by Toll-like receptors (TLRs) at the level of TAK1 and TAB1. Further inhibits the activation step when ARRB2 directly associates with NLRP3, leading to inhibition of pro-inflammatory cytokine release. Mediates LCFAs anti-apoptotic effects. This Macaca fascicularis (Crab-eating macaque) protein is Free fatty acid receptor 4 (FFAR4).